The following is a 793-amino-acid chain: Phenylalanine--tRNA ligase beta subunit (793 aa).

The tRNA-binding domain maps to 39–148 (AGQFTHVIVA…DEAPIGMDLR (110 aa)). In terms of domain architecture, B5 spans 401–477 (PGTVSFLFDT…RLYGYDKLQA (77 aa)). Asp455, Asp461, Glu464, and Glu465 together coordinate Mg(2+). One can recognise an FDX-ACB domain in the interval 698–792 (SKYPQIRRDL…LENEFSILLR (95 aa)).

Belongs to the phenylalanyl-tRNA synthetase beta subunit family. Type 1 subfamily. In terms of assembly, tetramer of two alpha and two beta subunits. It depends on Mg(2+) as a cofactor.

It is found in the cytoplasm. The catalysed reaction is tRNA(Phe) + L-phenylalanine + ATP = L-phenylalanyl-tRNA(Phe) + AMP + diphosphate + H(+). This chain is Phenylalanine--tRNA ligase beta subunit, found in Legionella pneumophila (strain Lens).